Consider the following 479-residue polypeptide: Sulfate adenylyltransferase subunit 1 (479 aa).

The region spanning Lys-25–Arg-239 is the tr-type G domain. The interval Gly-34–Ser-41 is G1. A GTP-binding site is contributed by Gly-34–Ser-41. The interval Gly-92 to Asp-96 is G2. Residues Asp-113 to Gly-116 are G3. Residues Asp-113–His-117 and Asn-168–Asp-171 each bind GTP. The segment at Asn-168–Asp-171 is G4. Residues Ser-206–Leu-208 are G5.

Belongs to the TRAFAC class translation factor GTPase superfamily. Classic translation factor GTPase family. CysN/NodQ subfamily. As to quaternary structure, heterodimer composed of CysD, the smaller subunit, and CysN.

It carries out the reaction sulfate + ATP + H(+) = adenosine 5'-phosphosulfate + diphosphate. The protein operates within sulfur metabolism; hydrogen sulfide biosynthesis; sulfite from sulfate: step 1/3. With CysD forms the ATP sulfurylase (ATPS) that catalyzes the adenylation of sulfate producing adenosine 5'-phosphosulfate (APS) and diphosphate, the first enzymatic step in sulfur assimilation pathway. APS synthesis involves the formation of a high-energy phosphoric-sulfuric acid anhydride bond driven by GTP hydrolysis by CysN coupled to ATP hydrolysis by CysD. This is Sulfate adenylyltransferase subunit 1 from Salmonella choleraesuis (strain SC-B67).